Reading from the N-terminus, the 250-residue chain is Small ribosomal subunit protein uS3 (250 aa).

In terms of domain architecture, KH type-2 spans 39–111 (IRTLIKNHYP…KVQINIFEVK (73 aa)).

It belongs to the universal ribosomal protein uS3 family. Part of the 30S ribosomal subunit. Forms a tight complex with proteins S10 and S14.

In terms of biological role, binds the lower part of the 30S subunit head. Binds mRNA in the 70S ribosome, positioning it for translation. The chain is Small ribosomal subunit protein uS3 from Rubus stunt phytoplasma.